We begin with the raw amino-acid sequence, 205 residues long: Holliday junction branch migration complex subunit RuvA (205 aa).

The interval 1-64 (MIGKLKGVID…EDMIRLYGFA (64 aa)) is domain I. Residues 65–143 (TQLEREWFRL…AFAGEASGTI (79 aa)) are domain II. The segment at 144–152 (GLKQELGAG) is flexible linker. Residues 153 to 205 (AAPAPVADAVSALSNLGYSRDQAANAVAAALKETGEGADSAKLIRLGLKELSQ) are domain III.

The protein belongs to the RuvA family. As to quaternary structure, homotetramer. Forms an RuvA(8)-RuvB(12)-Holliday junction (HJ) complex. HJ DNA is sandwiched between 2 RuvA tetramers; dsDNA enters through RuvA and exits via RuvB. An RuvB hexamer assembles on each DNA strand where it exits the tetramer. Each RuvB hexamer is contacted by two RuvA subunits (via domain III) on 2 adjacent RuvB subunits; this complex drives branch migration. In the full resolvosome a probable DNA-RuvA(4)-RuvB(12)-RuvC(2) complex forms which resolves the HJ.

The protein resides in the cytoplasm. In terms of biological role, the RuvA-RuvB-RuvC complex processes Holliday junction (HJ) DNA during genetic recombination and DNA repair, while the RuvA-RuvB complex plays an important role in the rescue of blocked DNA replication forks via replication fork reversal (RFR). RuvA specifically binds to HJ cruciform DNA, conferring on it an open structure. The RuvB hexamer acts as an ATP-dependent pump, pulling dsDNA into and through the RuvAB complex. HJ branch migration allows RuvC to scan DNA until it finds its consensus sequence, where it cleaves and resolves the cruciform DNA. The polypeptide is Holliday junction branch migration complex subunit RuvA (Brucella abortus (strain S19)).